The primary structure comprises 1249 residues: Myosin-1 (1249 aa).

The tract at residues 1-40 is disordered; sequence MGHSRRPAGGEKKSRFGRSKAAADVGDGRQAGGKPQVRKA. One can recognise a Myosin motor domain in the interval 50-729; the sequence is IGVSDLTLLS…TLFALEAMRD (680 aa). Position 143 to 150 (143 to 150) interacts with ATP; it reads GESGAGKT. Position 371 is a phosphoserine (Ser371). An actin-binding region spans residues 418 to 500; that stretch reads SIGILDIYGF…PGVFAALNDA (83 aa). IQ domains follow at residues 733–753 and 754–779; these read HNMA…RTEC and AIRI…QGHT. The TH1 domain occupies 787-979; sequence RRRMSILGSR…PGEPPNSVSK (193 aa). Disordered regions lie at residues 959–1081 and 1127–1249; these read DSYK…KAKA and EAYL…DDDW. Composition is skewed to low complexity over residues 1026–1035 and 1043–1061; these read PQTAAAQPTP and PVAA…ASAR. Residues 1062-1073 show a composition bias toward pro residues; the sequence is APPPPPPAPPAA. The SH3 domain maps to 1074–1135; the sequence is AGPKKAKALY…PEAYLEEQVA (62 aa). Positions 1137–1149 are enriched in pro residues; it reads TPKPAPPPPPPVA. Positions 1150-1170 are enriched in low complexity; it reads PRASPAPVNGSAAVAAAKAKA. The span at 1199–1221 shows a compositional bias: polar residues; the sequence is VSMNSQGDSSGASGRGTPSSVSN. Residues 1222–1235 show a composition bias toward low complexity; it reads ASLAGGLAEALRAR.

The protein belongs to the TRAFAC class myosin-kinesin ATPase superfamily. Myosin family. Interacts (via IQ domains) with camA. In terms of processing, phosphorylation of the TEDS site (Ser-371) is required for the polarization of the actin cytoskeleton. Phosphorylation probably activates the myosin-I ATPase activity.

Its subcellular location is the cytoplasm. It is found in the cytoskeleton. It localises to the actin patch. Functionally, type-I myosin implicated in the organization of the actin cytoskeleton. Required for proper actin cytoskeleton polarization. At the cell cortex, assembles in patch-like structures together with proteins from the actin-polymerizing machinery and promotes actin assembly. Functions as actin nucleation-promoting factor (NPF) for the Arp2/3 complex. Plays an important role in polarized growth, spore germination, hyphal morphogenesis, and septal wall formation. The sequence is that of Myosin-1 (myoA) from Emericella nidulans (strain FGSC A4 / ATCC 38163 / CBS 112.46 / NRRL 194 / M139) (Aspergillus nidulans).